The sequence spans 207 residues: Antitermination protein Q (207 aa).

The segment at methionine 1–serine 28 is disordered. Zn(2+) is bound by residues cysteine 118, cysteine 121, cysteine 144, and cysteine 147. A zinc finger lies at cysteine 118 to cysteine 147. A DNA-binding region spans residues leucine 171–histidine 192.

The protein belongs to the phage antitermination Q type 2 family. As to quaternary structure, interacts with host RPOB (via flap domain); this interaction renders host RNAP resistant to transcription pausing and allows it to read through termination signals. Interacts with host RNA polymerase sigma factor RPOD (via domain-4). Interacts with host NusA (via N-terminus and AR2 domain); this interaction releases the autoinhibition of NusA.

Its function is as follows. Mediates the switch from middle to viral late gene expression by associating with host RNA polymerase (RNAP) so that the latter can read without pausing and through transcription terminators preceding late genes. Competes with host factor sigma 70 for binding to RPOB, the beta-subunit of host RNAP. To join the elongation complex, binds a specific DNA Q-binding element (QBE) and interacts with RNAP that is paused during early elongation. Participates in the lysis-lysogeny decision by activating the expression of the late lytic genes. The protein is Antitermination protein Q (23) of Salmonella typhimurium.